A 468-amino-acid chain; its full sequence is Argininosuccinate lyase (468 aa).

Belongs to the lyase 1 family. Argininosuccinate lyase subfamily.

It is found in the cytoplasm. The enzyme catalyses 2-(N(omega)-L-arginino)succinate = fumarate + L-arginine. It participates in amino-acid biosynthesis; L-arginine biosynthesis; L-arginine from L-ornithine and carbamoyl phosphate: step 3/3. This Zymomonas mobilis subsp. mobilis (strain ATCC 31821 / ZM4 / CP4) protein is Argininosuccinate lyase.